The following is a 464-amino-acid chain: Argininosuccinate lyase (464 aa).

It belongs to the lyase 1 family. Argininosuccinate lyase subfamily.

It localises to the cytoplasm. It catalyses the reaction 2-(N(omega)-L-arginino)succinate = fumarate + L-arginine. The protein operates within amino-acid biosynthesis; L-arginine biosynthesis; L-arginine from L-ornithine and carbamoyl phosphate: step 3/3. This Desulfotalea psychrophila (strain LSv54 / DSM 12343) protein is Argininosuccinate lyase.